A 237-amino-acid chain; its full sequence is tRNA(His) guanylyltransferase (237 aa).

Mg(2+) is bound by residues aspartate 29, glycine 30, and aspartate 77. GTP-binding positions include 29–34 (DGKKFH) and 76–77 (SD).

It belongs to the tRNA(His) guanylyltransferase family. Mg(2+) serves as cofactor.

The catalysed reaction is a 5'-end ribonucleotide-tRNA(His) + GTP + ATP + H2O = a 5'-end phospho-guanosine-ribonucleotide-tRNA(His) + AMP + 2 diphosphate + H(+). In terms of biological role, adds a GMP to the 5'-end of tRNA(His) after transcription and RNase P cleavage. This Kluyveromyces lactis (strain ATCC 8585 / CBS 2359 / DSM 70799 / NBRC 1267 / NRRL Y-1140 / WM37) (Yeast) protein is tRNA(His) guanylyltransferase (THG1).